The chain runs to 68 residues: Sec-independent protein translocase protein TatA (68 aa).

Residues 1 to 21 (MGSLSIWHWLIVLLIVVLVFG) form a helical membrane-spanning segment. The tract at residues 42-68 (GMNEGAKDGQPPAKDAGRIIDGEADKK) is disordered. Residues 56 to 68 (DAGRIIDGEADKK) are compositionally biased toward basic and acidic residues.

The protein belongs to the TatA/E family. The Tat system comprises two distinct complexes: a TatABC complex, containing multiple copies of TatA, TatB and TatC subunits, and a separate TatA complex, containing only TatA subunits. Substrates initially bind to the TatABC complex, which probably triggers association of the separate TatA complex to form the active translocon.

The protein localises to the cell inner membrane. Part of the twin-arginine translocation (Tat) system that transports large folded proteins containing a characteristic twin-arginine motif in their signal peptide across membranes. TatA could form the protein-conducting channel of the Tat system. The sequence is that of Sec-independent protein translocase protein TatA from Chromobacterium violaceum (strain ATCC 12472 / DSM 30191 / JCM 1249 / CCUG 213 / NBRC 12614 / NCIMB 9131 / NCTC 9757 / MK).